Consider the following 336-residue polypeptide: Probable allantoicase (336 aa).

This sequence belongs to the allantoicase family.

The catalysed reaction is allantoate + H2O = (S)-ureidoglycolate + urea. It participates in nitrogen metabolism; (S)-allantoin degradation; (S)-ureidoglycolate from allantoate (aminidohydrolase route): step 1/1. The sequence is that of Probable allantoicase from Acinetobacter baumannii (strain ACICU).